The sequence spans 64 residues: Large ribosomal subunit protein bL35 (64 aa).

The tract at residues 1–56 is disordered; that stretch reads MPKMKSNKSVAARFKLTGSGQLKRTRPGKRHKLSKKSSQEKRNLSKQPLVDKGQVG. Residues 23–35 are compositionally biased toward basic residues; sequence KRTRPGKRHKLSK.

The protein belongs to the bacterial ribosomal protein bL35 family.

The sequence is that of Large ribosomal subunit protein bL35 from Chlamydia abortus (strain DSM 27085 / S26/3) (Chlamydophila abortus).